A 355-amino-acid chain; its full sequence is Protein RecA (355 aa).

65-72 is a binding site for ATP; sequence GPESSGKT.

Belongs to the RecA family.

It is found in the cytoplasm. Functionally, can catalyze the hydrolysis of ATP in the presence of single-stranded DNA, the ATP-dependent uptake of single-stranded DNA by duplex DNA, and the ATP-dependent hybridization of homologous single-stranded DNAs. It interacts with LexA causing its activation and leading to its autocatalytic cleavage. The polypeptide is Protein RecA (Pseudomonas entomophila (strain L48)).